The primary structure comprises 365 residues: Pyruvate dehydrogenase E1 component subunit beta, mitochondrial (365 aa).

A mitochondrion-targeting transit peptide spans 1–24 (MLRTRLIQAASSAQRAFSTSQKAL). Glutamate 85 is a thiamine diphosphate binding site. Residues isoleucine 138, alanine 186, isoleucine 187, and aspartate 189 each contribute to the K(+) site.

Requires thiamine diphosphate as cofactor. As to expression, expressed in salivary glands (at protein level).

It is found in the mitochondrion matrix. It catalyses the reaction N(6)-[(R)-lipoyl]-L-lysyl-[protein] + pyruvate + H(+) = N(6)-[(R)-S(8)-acetyldihydrolipoyl]-L-lysyl-[protein] + CO2. Its function is as follows. The pyruvate dehydrogenase complex catalyzes the overall conversion of pyruvate to acetyl-CoA and CO(2). Might play a role in regulating synapse structure formation at neuromuscular junctions. Might play a role in maintenance of mitochondrial morphology. The sequence is that of Pyruvate dehydrogenase E1 component subunit beta, mitochondrial from Drosophila melanogaster (Fruit fly).